The sequence spans 388 residues: Ribonucleoside-diphosphate reductase subunit beta (388 aa).

Residues Asp84, Glu115, and His118 each coordinate Fe cation. Tyr122 is an active-site residue. The Fe cation site is built by Glu212, Glu247, and His250.

This sequence belongs to the ribonucleoside diphosphate reductase small chain family. Heterodimer of a large and a small subunit. Requires Fe cation as cofactor.

It catalyses the reaction a 2'-deoxyribonucleoside 5'-diphosphate + [thioredoxin]-disulfide + H2O = a ribonucleoside 5'-diphosphate + [thioredoxin]-dithiol. Functionally, provides the precursors necessary for DNA synthesis. Catalyzes the biosynthesis of deoxyribonucleotides from the corresponding ribonucleotides. The polypeptide is Ribonucleoside-diphosphate reductase subunit beta (NRDB) (Escherichia coli (Bacteriophage T4)).